Consider the following 491-residue polypeptide: Cobyric acid synthase (491 aa).

The region spanning 250-441 is the GATase cobBQ-type domain; that stretch reads DLQITVVRLP…LHGLFDNGPW (192 aa). Cys331 (nucleophile) is an active-site residue. Residue His433 is part of the active site.

This sequence belongs to the CobB/CobQ family. CobQ subfamily.

It functions in the pathway cofactor biosynthesis; adenosylcobalamin biosynthesis. Catalyzes amidations at positions B, D, E, and G on adenosylcobyrinic A,C-diamide. NH(2) groups are provided by glutamine, and one molecule of ATP is hydrogenolyzed for each amidation. In Trichormus variabilis (strain ATCC 29413 / PCC 7937) (Anabaena variabilis), this protein is Cobyric acid synthase.